Here is a 383-residue protein sequence, read N- to C-terminus: Chorismate synthase (383 aa).

Arg48 contacts NADP(+). Residues 125–127 (RSS), Gly286, 301–305 (HAPTS), and Arg328 each bind FMN. Residues 361–383 (PDRLDDNPGQYETEYHPSSPQTN) form a disordered region.

The protein belongs to the chorismate synthase family. The cofactor is FMNH2.

It catalyses the reaction 5-O-(1-carboxyvinyl)-3-phosphoshikimate = chorismate + phosphate. The protein operates within metabolic intermediate biosynthesis; chorismate biosynthesis; chorismate from D-erythrose 4-phosphate and phosphoenolpyruvate: step 7/7. Its function is as follows. Catalyzes the anti-1,4-elimination of the C-3 phosphate and the C-6 proR hydrogen from 5-enolpyruvylshikimate-3-phosphate (EPSP) to yield chorismate, which is the branch point compound that serves as the starting substrate for the three terminal pathways of aromatic amino acid biosynthesis. This reaction introduces a second double bond into the aromatic ring system. This chain is Chorismate synthase, found in Haloquadratum walsbyi (strain DSM 16790 / HBSQ001).